A 317-amino-acid chain; its full sequence is Apolipoprotein E (317 aa).

An N-terminal signal peptide occupies residues 1 to 18 (MKVLWAALLVTFLAGCQA). Repeat copies occupy residues 80–101 (TLMDETMKELKAYKSELEEQLS), 102–123 (PVAEETRARLSKELQAAQARLG), 124–145 (ADMEDVRSRLVQYRSEVQAMLG), 146–167 (QSTEELRARLASHLRKLRKRLL), 168–189 (RDADDLQKRLAVYQAGAREGAE), 190–211 (RGVSAIRERLGPLVEQGRVRAA), 212–233 (TVGSLASQPLQERAQALGERLR), and 234–255 (ARMEEMGSRTRDRLDEVKEQVA). Positions 80-255 (TLMDETMKEL…RLDEVKEQVA (176 aa)) are 8 X 22 AA approximate tandem repeats. The residue at position 143 (methionine 143) is a Methionine sulfoxide. Serine 147 carries the post-translational modification Phosphoserine. The tract at residues 158-168 (HLRKLRKRLLR) is LDL and other lipoprotein receptors binding. 162–165 (LRKR) is a heparin binding site. Residues 210–290 (AATVGSLASQ…SWFEPLVEDM (81 aa)) are lipid-binding and lipoprotein association. 229–236 (GERLRARM) is a heparin binding site. Residues 266–317 (QQISLQAEAFQARLKSWFEPLVEDMQRQWAGLVEKVQAAVGASTAPVPSDNH) are homooligomerization. Residues 278-290 (RLKSWFEPLVEDM) form a specificity for association with VLDL region.

It belongs to the apolipoprotein A1/A4/E family. Homotetramer. May interact with ABCA1; functionally associated with ABCA1 in the biogenesis of HDLs. May interact with APP/A4 amyloid-beta peptide; the interaction is extremely stable in vitro but its physiological significance is unclear. May interact with MAPT. May interact with MAP2. In the cerebrospinal fluid, interacts with secreted SORL1. Interacts with PMEL; this allows the loading of PMEL luminal fragment on ILVs to induce fibril nucleation. APOE exists as multiple glycosylated and sialylated glycoforms within cells and in plasma. The extent of glycosylation and sialylation are tissue and context specific. Post-translationally, glycated in plasma VLDL. In terms of processing, phosphorylated by FAM20C in the extracellular medium.

The protein localises to the secreted. The protein resides in the extracellular space. Its subcellular location is the extracellular matrix. It localises to the extracellular vesicle. It is found in the endosome. The protein localises to the multivesicular body. Its function is as follows. APOE is an apolipoprotein, a protein associating with lipid particles, that mainly functions in lipoprotein-mediated lipid transport between organs via the plasma and interstitial fluids. APOE is a core component of plasma lipoproteins and is involved in their production, conversion and clearance. Apolipoproteins are amphipathic molecules that interact both with lipids of the lipoprotein particle core and the aqueous environment of the plasma. As such, APOE associates with chylomicrons, chylomicron remnants, very low density lipoproteins (VLDL) and intermediate density lipoproteins (IDL) but shows a preferential binding to high-density lipoproteins (HDL). It also binds a wide range of cellular receptors including the LDL receptor/LDLR, the LDL receptor-related proteins LRP1, LRP2 and LRP8 and the very low-density lipoprotein receptor/VLDLR that mediate the cellular uptake of the APOE-containing lipoprotein particles. Finally, APOE also has a heparin-binding activity and binds heparan-sulfate proteoglycans on the surface of cells, a property that supports the capture and the receptor-mediated uptake of APOE-containing lipoproteins by cells. A main function of APOE is to mediate lipoprotein clearance through the uptake of chylomicrons, VLDLs, and HDLs by hepatocytes. APOE is also involved in the biosynthesis by the liver of VLDLs as well as their uptake by peripheral tissues ensuring the delivery of triglycerides and energy storage in muscle, heart and adipose tissues. By participating in the lipoprotein-mediated distribution of lipids among tissues, APOE plays a critical role in plasma and tissues lipid homeostasis. APOE is also involved in two steps of reverse cholesterol transport, the HDLs-mediated transport of cholesterol from peripheral tissues to the liver, and thereby plays an important role in cholesterol homeostasis. First, it is functionally associated with ABCA1 in the biogenesis of HDLs in tissues. Second, it is enriched in circulating HDLs and mediates their uptake by hepatocytes. APOE also plays an important role in lipid transport in the central nervous system, regulating neuron survival and sprouting. The protein is Apolipoprotein E (APOE) of Papio anubis (Olive baboon).